Here is a 119-residue protein sequence, read N- to C-terminus: MKMVAFVFSHAPHGISLGREGLDAIFSISSIFKKISVFFIGDGVLQLIKNQQPEHILARNYTSSFSILSLYNIKDLYCCKASLLERGLNNNNNFILNIDVLDSYNLRLKLDNYDAIINF.

Belongs to the DsrF/TusC family. In terms of assembly, heterohexamer, formed by a dimer of trimers. The hexameric TusBCD complex contains 2 copies each of TusB, TusC and TusD. The TusBCD complex interacts with TusE.

The protein localises to the cytoplasm. Part of a sulfur-relay system required for 2-thiolation of 5-methylaminomethyl-2-thiouridine (mnm(5)s(2)U) at tRNA wobble positions. This chain is Protein TusC, found in Buchnera aphidicola subsp. Acyrthosiphon pisum (strain APS) (Acyrthosiphon pisum symbiotic bacterium).